The sequence spans 418 residues: Nucleoredoxin (418 aa).

In terms of domain architecture, Thioredoxin spans 109–309 (KYKVTSIPSL…ESNAVQLHEG (201 aa)).

It belongs to the nucleoredoxin family.

The protein localises to the cytoplasm. Its subcellular location is the cytosol. It localises to the nucleus. The catalysed reaction is [protein]-dithiol + NAD(+) = [protein]-disulfide + NADH + H(+). It carries out the reaction [protein]-dithiol + NADP(+) = [protein]-disulfide + NADPH + H(+). Functionally, functions as a redox-dependent negative regulator of the Wnt signaling pathway. In Danio rerio (Zebrafish), this protein is Nucleoredoxin (nxn).